Here is a 259-residue protein sequence, read N- to C-terminus: Alpha-acetolactate decarboxylase (259 aa).

The protein belongs to the alpha-acetolactate decarboxylase family.

It carries out the reaction (2S)-2-acetolactate + H(+) = (R)-acetoin + CO2. Its pathway is polyol metabolism; (R,R)-butane-2,3-diol biosynthesis; (R,R)-butane-2,3-diol from pyruvate: step 2/3. In terms of biological role, converts acetolactate into acetoin, which can be excreted by the cells. This may be a mechanism for controlling the internal pH of cells in the stationary stage. The protein is Alpha-acetolactate decarboxylase (budA) of Raoultella terrigena (Klebsiella terrigena).